Here is an 83-residue protein sequence, read N- to C-terminus: Short neurotoxin II (83 aa).

The N-terminal stretch at 1 to 21 (MKTLLLTLVVVTVVCLDLGYT) is a signal peptide. 4 disulfide bridges follow: cysteine 24-cysteine 45, cysteine 38-cysteine 62, cysteine 64-cysteine 75, and cysteine 76-cysteine 81.

This sequence belongs to the three-finger toxin family. Short-chain subfamily. Type I alpha-neurotoxin sub-subfamily. As to expression, expressed by the venom gland.

The protein localises to the secreted. Functionally, binds to muscle nicotinic acetylcholine receptor (nAChR) and inhibit acetylcholine from binding to the receptor, thereby impairing neuromuscular transmission. This chain is Short neurotoxin II, found in Laticauda colubrina (Yellow-lipped sea krait).